The primary structure comprises 109 residues: U-scoloptoxin(16)-Cw1a (109 aa).

An N-terminal signal peptide occupies residues 1–21; it reads MNAVFIVFLSAILSYPHESFA.

The protein belongs to the scoloptoxin-16 family. In terms of processing, contains 4 disulfide bonds. In terms of tissue distribution, expressed by the venom gland.

The protein resides in the secreted. This is U-scoloptoxin(16)-Cw1a from Cormocephalus westwoodi (Westwood's green centipede).